The chain runs to 212 residues: MATVTILSPKSIPKVTDSKFGARVSDQIVNVVKCGKSGRRLKLAKLVSAAGLSQIEPDINEDPIGQFETNSIEMEDFKYGYYDGAHTYYEGEVQKGTFWGAIADDIAAVDQTNGFQGLISCMFLPAIALGMYFDAPGEYLFIGAALFTVVFCIIEMDKPDQPHNFEPQIYKLERGARDKLINDYNTMSIWDFNDKYGDVWDFTIEKDDIATR.

A chloroplast-targeting transit peptide spans 1–48 (MATVTILSPKSIPKVTDSKFGARVSDQIVNVVKCGKSGRRLKLAKLVS). 2 consecutive transmembrane segments (helical) span residues 115-135 (FQGL…YFDA) and 136-156 (PGEY…IIEM).

Part of the chloroplast NDH complex, composed of a mixture of chloroplast and nucleus encoded subunits. Component of the NDH subcomplex B, at least composed of PnsB1, PnsB2, PnsB3, PnsB4 and PnsB5.

The protein resides in the plastid. Its subcellular location is the chloroplast membrane. Functionally, NDH shuttles electrons from NAD(P)H:plastoquinone, via FMN and iron-sulfur (Fe-S) centers, to quinones in the photosynthetic chain and possibly in a chloroplast respiratory chain. The immediate electron acceptor for the enzyme in this species is believed to be plastoquinone. Couples the redox reaction to proton translocation, and thus conserves the redox energy in a proton gradient. This is Photosynthetic NDH subunit of subcomplex B 5, chloroplastic from Arabidopsis thaliana (Mouse-ear cress).